The primary structure comprises 473 residues: Catalase easC (473 aa).

A compositionally biased stretch (low complexity) spans 1-15 (MASEVSVASSGSEHS). A disordered region spans residues 1–31 (MASEVSVASSGSEHSGAQKCPFQDPGLSSMD). Histidine 54 is an active-site residue. Tyrosine 344 provides a ligand contact to heme. The tract at residues 352 to 389 (LGPNNLDLPANRTKKLADGSRPEKAEMAPQKVPSQEHA) is disordered. Residues 366 to 377 (KLADGSRPEKAE) are compositionally biased toward basic and acidic residues.

The protein belongs to the catalase family. The cofactor is heme.

It functions in the pathway alkaloid biosynthesis; ergot alkaloid biosynthesis. Catalase; part of the gene cluster that mediates the biosynthesis of fungal ergot alkaloid. DmaW catalyzes the first step of ergot alkaloid biosynthesis by condensing dimethylallyl diphosphate (DMAP) and tryptophan to form 4-dimethylallyl-L-tryptophan. The second step is catalyzed by the methyltransferase easF that methylates 4-dimethylallyl-L-tryptophan in the presence of S-adenosyl-L-methionine, resulting in the formation of 4-dimethylallyl-L-abrine. The catalase easC and the FAD-dependent oxidoreductase easE then transform 4-dimethylallyl-L-abrine to chanoclavine-I which is further oxidized by easD in the presence of NAD(+), resulting in the formation of chanoclavine-I aldehyde. Agroclavine dehydrogenase easG then mediates the conversion of chanoclavine-I aldehyde to agroclavine via a non-enzymatic adduct reaction: the substrate is an iminium intermediate that is formed spontaneously from chanoclavine-I aldehyde in the presence of glutathione. The presence of easA is not required to complete this reaction. Further conversion of agroclavine to paspalic acid is a two-step process involving oxidation of agroclavine to elymoclavine and of elymoclavine to paspalic acid, the second step being performed by the elymoclavine oxidase cloA. Paspalic acid is then further converted to D-lysergic acid. Ergopeptines are assembled from D-lysergic acid and three different amino acids by the D-lysergyl-peptide-synthetases composed each of a monomudular and a trimodular nonribosomal peptide synthetase subunit. LpsB and lpsC encode the monomodular subunits responsible for D-lysergic acid activation and incorporation into the ergopeptine backbone. LpsA1 and A2 subunits encode the trimodular nonribosomal peptide synthetase assembling the tripeptide portion of ergopeptines. LpsA1 is responsible for formation of the major ergopeptine, ergotamine, and lpsA2 for alpha-ergocryptine, the minor ergopeptine of the total alkaloid mixture elaborated by C.purpurea. D-lysergyl-tripeptides are assembled by the nonribosomal peptide synthetases and released as N-(D-lysergyl-aminoacyl)-lactams. Cyclolization of the D-lysergyl-tripeptides is performed by the Fe(2+)/2-ketoglutarate-dependent dioxygenase easH which introduces a hydroxyl group into N-(D-lysergyl-aminoacyl)-lactam at alpha-C of the aminoacyl residue followed by spontaneous condensation with the terminal lactam carbonyl group. In Claviceps purpurea (strain 20.1) (Ergot fungus), this protein is Catalase easC.